We begin with the raw amino-acid sequence, 150 residues long: Histone H2A.1 (150 aa).

Met-1 bears the N-acetylmethionine mark. 2 stretches are compositionally biased toward basic residues: residues 1-24 (MDASTKTKKGAGGRKGGGPRKKSV) and 141-150 (SKAKKSPKKA). 2 disordered regions span residues 1–26 (MDASTKTKKGAGGRKGGGPRKKSVTR) and 128–150 (RKENAAASTPKSPSKAKKSPKKA). Short sequence motifs (SPKK motif) lie at residues 139-142 (SPSK) and 146-149 (SPKK).

It belongs to the histone H2A family. As to quaternary structure, the nucleosome is a histone octamer containing two molecules each of H2A, H2B, H3 and H4 assembled in one H3-H4 heterotetramer and two H2A-H2B heterodimers. The octamer wraps approximately 147 bp of DNA. As to expression, high expression in root meristematic tissues, moderate in whole shoot and very low in mature leaves.

The protein resides in the nucleus. Its subcellular location is the chromosome. Functionally, core component of nucleosome. Nucleosomes wrap and compact DNA into chromatin, limiting DNA accessibility to the cellular machineries which require DNA as a template. Histones thereby play a central role in transcription regulation, DNA repair, DNA replication and chromosomal stability. DNA accessibility is regulated via a complex set of post-translational modifications of histones, also called histone code, and nucleosome remodeling. The sequence is that of Histone H2A.1 from Pisum sativum (Garden pea).